A 251-amino-acid chain; its full sequence is Tungstate/molybdate/chromate-binding protein ModA (251 aa).

The signal sequence occupies residues 1–23; sequence MTTRLPQLLLALLASAVSLAASA. Residues Thr-60 and Ile-168 each coordinate molybdate.

This sequence belongs to the bacterial solute-binding protein ModA family. In terms of assembly, the complex is composed of two ATP-binding proteins (ModC), two transmembrane proteins (ModB) and a solute-binding protein (ModA).

The protein localises to the periplasm. Part of the ABC transporter complex ModABC involved in the transport of molybdenum into the cell. Binds tungstate and molybdate. Can also bind chromate, with lower affinity. Plays an essential role in recruitment of molybdate for nitrate reduction. The protein is Tungstate/molybdate/chromate-binding protein ModA of Pseudomonas aeruginosa (strain ATCC 15692 / DSM 22644 / CIP 104116 / JCM 14847 / LMG 12228 / 1C / PRS 101 / PAO1).